The sequence spans 281 residues: Endonuclease III-like protein 1 (281 aa).

A mitochondrion-targeting transit peptide spans 1-17; it reads MCAAAPRGGGRAARRLG. A disordered region spans residues 1–60; that stretch reads MCAAAPRGGGRAARRLGAATAGSRVPSAAPRYSRRTRRVPIAYEAEPKPESPGPKWEPEN. Positions 15–24 are enriched in low complexity; the sequence is RLGAATAGSR. The region spanning 168–192 is the HhH domain; sequence KYGGDIPGTVEELVKLPGVGPKMAH. K189 acts as the Nucleophile; for N-glycosylase activity in catalysis. The [4Fe-4S] cluster site is built by C259, C266, C269, and C275.

Belongs to the Nth/MutY family. [4Fe-4S] cluster serves as cofactor.

Its subcellular location is the nucleus. It is found in the mitochondrion. The enzyme catalyses 2'-deoxyribonucleotide-(2'-deoxyribose 5'-phosphate)-2'-deoxyribonucleotide-DNA = a 3'-end 2'-deoxyribonucleotide-(2,3-dehydro-2,3-deoxyribose 5'-phosphate)-DNA + a 5'-end 5'-phospho-2'-deoxyribonucleoside-DNA + H(+). In terms of biological role, bifunctional DNA N-glycosylase with associated apurinic/apyrimidinic (AP) lyase function that catalyzes the first step in base excision repair (BER), the primary repair pathway for the repair of oxidative DNA damage. The DNA N-glycosylase activity releases the damaged DNA base from DNA by cleaving the N-glycosidic bond, leaving an AP site. The AP lyase activity cleaves the phosphodiester bond 3' to the AP site by a beta-elimination. Primarily recognizes and repairs oxidative base damage of pyrimidines. The chain is Endonuclease III-like protein 1 from Gallus gallus (Chicken).